The primary structure comprises 324 residues: Arginase (324 aa).

Residues His115, Asp142, His144, and Asp146 each coordinate Mn(2+). Residues His144 to His148, Ser155 to Asn157, and Asp196 contribute to the substrate site. Mn(2+) contacts are provided by Asp244 and Asp246. Substrate contacts are provided by Thr258 and Glu289.

It belongs to the arginase family. As to quaternary structure, homohexamer. Mn(2+) is required as a cofactor.

It carries out the reaction L-arginine + H2O = urea + L-ornithine. The protein operates within nitrogen metabolism; urea cycle; L-ornithine and urea from L-arginine: step 1/1. This Agrobacterium fabrum (strain C58 / ATCC 33970) (Agrobacterium tumefaciens (strain C58)) protein is Arginase (arcA).